Here is a 369-residue protein sequence, read N- to C-terminus: MHRGRFATLVIVALAVTMTAPAGALAPQPPAQHADADRACSFPVTEPDASNTAITLDSEPERVVTLNPSAAQTMWELGDRDAVVGVSQFGTYLPTASQRTVVSGGQPSQTNVEAVVGLDPDLVLAPNTVRNTTVTRLRSAGITVFQFRAATSIDGVVEKTATIGRLTGNCAAAAATTAEMRDRVAAIADAVPDTDSARPRVYYHLGDGYTAGPNTFIGAAIEAAGGHNIAADVNTTSSYPQLSEEVIVSQDPDVVVTGVSADRLDATASALVAPSSVVRNTTAYATGNVVAVNTNHINQPAPRIVEPMARMANAFHNTTINTTLDAQPSATTTATSTAPPTDAADGTAPGFGVAAAVCALAGAALVARR.

An N-terminal signal peptide occupies residues 1-24; the sequence is MHRGRFATLVIVALAVTMTAPAGA. One can recognise a Fe/B12 periplasmic-binding domain in the interval 62-319; that stretch reads RVVTLNPSAA…RMANAFHNTT (258 aa). The disordered stretch occupies residues 322-343; the sequence is TTLDAQPSATTTATSTAPPTDA. Residues 328 to 343 are compositionally biased toward low complexity; it reads PSATTTATSTAPPTDA.

As to quaternary structure, the complex is composed of two ATP-binding proteins (BtuD), two transmembrane proteins (BtuC) and a solute-binding protein (BtuF).

Required for corrinoid utilization. Probably part of the ABC transporter complex BtuCDF involved in cobalamin (vitamin B12) import. Probably binds cobalamin and delivers it to the surface of BtuC. The chain is Cobalamin-binding protein (btuF) from Halobacterium salinarum (strain ATCC 29341 / DSM 671 / R1).